Consider the following 336-residue polypeptide: tRNA N6-adenosine threonylcarbamoyltransferase (336 aa).

The Fe cation site is built by His-114 and His-118. Substrate contacts are provided by residues Leu-136–Gly-140, Asp-169, Gly-182, Asp-186, and Asn-275. Asp-302 is a Fe cation binding site.

Belongs to the KAE1 / TsaD family. Fe(2+) is required as a cofactor.

The protein resides in the cytoplasm. It carries out the reaction L-threonylcarbamoyladenylate + adenosine(37) in tRNA = N(6)-L-threonylcarbamoyladenosine(37) in tRNA + AMP + H(+). Required for the formation of a threonylcarbamoyl group on adenosine at position 37 (t(6)A37) in tRNAs that read codons beginning with adenine. Is involved in the transfer of the threonylcarbamoyl moiety of threonylcarbamoyl-AMP (TC-AMP) to the N6 group of A37, together with TsaE and TsaB. TsaD likely plays a direct catalytic role in this reaction. The chain is tRNA N6-adenosine threonylcarbamoyltransferase from Streptococcus agalactiae serotype V (strain ATCC BAA-611 / 2603 V/R).